The primary structure comprises 308 residues: MAMDNVTAVFQFLLIGISNYPQWRDTFFTLVLIIYLSTLLGNGFMIFLIHFDPNLHTPIYFFLSNLSFLDLCYGTASMPQALVHCFSTHPYLSYPRCLAQTSVSLALATAECLLLAAMAYDRVVAISNPLRYSVVMNGPVCVCLVATSWGTSLVLTAMLILSLRLHFCGANVINHFACEILSLIKLTCSDTSLNEFMILITSIFTLLLPFGFVLLSYIRIAMAIIRIRSLQGRLKAFTTCGSHLTVVTIFYGSAISMYMKTQSKSYPDQDKFISVFYGALTPMLNPLIYSLRKKDVKRAIRKVMLKRT.

Topologically, residues M1 to D25 are extracellular. A glycan (N-linked (GlcNAc...) asparagine) is linked at N5. The helical transmembrane segment at T26 to I46 threads the bilayer. Residues F47–N54 are Cytoplasmic-facing. A helical transmembrane segment spans residues L55–T75. The Extracellular segment spans residues A76–A99. C97 and C188 are disulfide-bonded. A helical transmembrane segment spans residues Q100–Y120. Residues D121 to P139 lie on the Cytoplasmic side of the membrane. A helical transmembrane segment spans residues V140–L159. The Extracellular portion of the chain corresponds to I160 to F196. Residues M197–S216 traverse the membrane as a helical segment. Residues Y217–A236 are Cytoplasmic-facing. The helical transmembrane segment at F237–M257 threads the bilayer. Residues Y258–D270 lie on the Extracellular side of the membrane. The helical transmembrane segment at K271 to L291 threads the bilayer. At R292–T308 the chain is on the cytoplasmic side.

It belongs to the G-protein coupled receptor 1 family.

It localises to the cell membrane. Odorant receptor. This is Olfactory receptor 13H1 (OR13H1) from Homo sapiens (Human).